Reading from the N-terminus, the 226-residue chain is MNIREWPVEERPREKLLNRGAGSLSDAELLAVFLGSGVKGRNVLELARGLLVKFGGLRQVLEADRQAFLGELGLGPVRYSQLQALLEIGRRNLAMSIERESVMDNPLAVRRYLKAMLRHEASEVFGCLFLDTKHRPLAFEILFRGTIDRASIYPREVVRRALLHNAAALILCHNHPSGNCEPSQDDVHLTLMLKRSLALIDVRVVDHVIVGDGEPLSMIEHGWLAG.

Residues 102–224 (VMDNPLAVRR…PLSMIEHGWL (123 aa)) enclose the MPN domain. Zn(2+)-binding residues include His173, His175, and Asp186. Residues 173–186 (HNHPSGNCEPSQDD) carry the JAMM motif motif.

The protein belongs to the UPF0758 family.

This Pseudomonas entomophila (strain L48) protein is UPF0758 protein PSEEN5431.